The sequence spans 541 residues: Atlastin-3 (541 aa).

Residues 1-25 (MLSPQRVAAAASRGADDAMESSKPG) are N-terminal hypervariable region (HVR). At 1–445 (MLSPQRVAAA…NVFSTFRTPA (445 aa)) the chain is on the cytoplasmic side. Positions 57–305 (DLDVVVVSVA…LIPYVLNPSK (249 aa)) constitute a GB1/RHD3-type G domain. GDP is bound by residues arginine 70, lysine 71, glycine 72, lysine 73, serine 74, phenylalanine 75, and arginine 109. Aspartate 142 lines the Mg(2+) pocket. Arginine 213, aspartate 214, valine 272, and serine 275 together coordinate GDP. A 3HB (three-helix bundle) domain region spans residues 343 to 434 (MLQATAEANN…YENFCKHNGS (92 aa)). The residue at position 391 (lysine 391) is an N6-acetyllysine. The helical transmembrane segment at 446-466 (VLFTGIVALYIASGLTGFIGL) threads the bilayer. Residue glutamate 467 is a topological domain, lumenal. Residues 468 to 488 (VVAQLFNCMVGLLLIALLTWG) form a helical membrane-spanning segment. Residues 489–541 (YIRYSGQYRELGGAIDFGAAYVLEQASSHIGNSTQATVRDAVVGRPSMDKKAQ) are Cytoplasmic-facing. Serine 535 bears the Phosphoserine mark.

Belongs to the TRAFAC class dynamin-like GTPase superfamily. GB1/RHD3 GTPase family. GB1 subfamily. Monomeric and homodimeric. The homodimer, transiently formed by two molecules on opposing membranes, is the active form mediating ER membrane fusion. Interacts with ZFYVE27; both proteins are involved in endoplasmic reticulum tubular network organization. Interacts with REEP5; both proteins are involved in endoplasmic reticulum tubular network organization. Expressed in the central nervous system and in dorsal root ganglia neurons. Expressed in peripheral tissues (at protein level).

The protein localises to the endoplasmic reticulum membrane. The enzyme catalyses GTP + H2O = GDP + phosphate + H(+). Functionally, atlastin-3 (ATL3) is a membrane-anchored GTPase that mediates the GTP-dependent fusion of endoplasmic reticulum (ER) membranes, maintaining the continuous ER network. It facilitates the formation of three-way junctions where ER tubules intersect. Two atlastin-3 on neighboring ER tubules bind GTP and form loose homodimers through the GB1/RHD3-type G domains and 3HB regions. Upon GTP hydrolysis, the 3HB regions tighten, pulling the membranes together to drive their fusion. After fusion, the homodimer disassembles upon release of inorganic phosphate (Pi). Subsequently, GDP dissociates, resetting the monomers to a conformation ready for a new fusion cycle. This Homo sapiens (Human) protein is Atlastin-3.